We begin with the raw amino-acid sequence, 428 residues long: Probable mitochondrial adenine nucleotide transporter BTL3 (428 aa).

3 Solcar repeats span residues 129-212 (LNTT…YRGQ), 222-307 (TTNF…LKSA), and 336-421 (LGPM…MKVV). Helical transmembrane passes span 132-152 (TKHL…IAPL), 187-207 (GNLV…YAYD), 228-248 (FVAG…LDTI), 283-303 (LVPS…VYDI), 342-362 (LLYG…FEVV), and 390-410 (VPAL…SAAI).

Belongs to the mitochondrial carrier (TC 2.A.29) family.

It localises to the mitochondrion inner membrane. In terms of biological role, probable mitochondrial adenylate carrier that catalyzes the transport of ATP, ADP and AMP. The chain is Probable mitochondrial adenine nucleotide transporter BTL3 from Arabidopsis thaliana (Mouse-ear cress).